We begin with the raw amino-acid sequence, 400 residues long: Elongation factor Tu (400 aa).

One can recognise a tr-type G domain in the interval 10–208 (KPHVNVGTIG…AMDNYIPDPQ (199 aa)). Residues 19-26 (GHIDHGKS) form a G1 region. Residue 19 to 26 (GHIDHGKS) coordinates GTP. Residue Ser26 participates in Mg(2+) binding. The tract at residues 60-64 (GITIN) is G2. The segment at 81–84 (DCPG) is G3. Residues 81 to 85 (DCPGH) and 136 to 139 (NKTD) each bind GTP. Residues 136–139 (NKTD) are G4. Residues 174–176 (SAL) form a G5 region.

This sequence belongs to the TRAFAC class translation factor GTPase superfamily. Classic translation factor GTPase family. EF-Tu/EF-1A subfamily. As to quaternary structure, monomer.

It is found in the cytoplasm. The catalysed reaction is GTP + H2O = GDP + phosphate + H(+). Functionally, GTP hydrolase that promotes the GTP-dependent binding of aminoacyl-tRNA to the A-site of ribosomes during protein biosynthesis. In Thermotoga maritima (strain ATCC 43589 / DSM 3109 / JCM 10099 / NBRC 100826 / MSB8), this protein is Elongation factor Tu.